The primary structure comprises 432 residues: Polypyrimidine tract-binding protein homolog 3 (432 aa).

RRM domains are found at residues 6–80, 98–187, 245–319, and 355–429; these read KVVH…FSSH, NRIL…YNND, CTVL…FSKH, and KMIH…FSQL.

The protein resides in the nucleus. Plays a role in pre-mRNA splicing. Binds to the polypyrimidine tract of introns. May promote the binding of U2 snRNP to pre-mRNA. The chain is Polypyrimidine tract-binding protein homolog 3 from Arabidopsis thaliana (Mouse-ear cress).